Here is a 122-residue protein sequence, read N- to C-terminus: Cupin 2 conserved barrel domain-containing protein (122 aa).

The segment at 55-119 (PGGVTTAEDH…DSPVEIVSIW (65 aa)) is cupin 2 conserved barrel. Positions 63, 65, 69, and 103 each coordinate Zn(2+).

Zn(2+) serves as cofactor.

The enzyme catalyses N(6)-hydroxy-L-lysine + L-glutamate + ATP = 1-L-glutamo-2-N(6-)L-lysinohydrazine + AMP + diphosphate + 2 H(+). With respect to regulation, inhibited by 1,10-phenanthroline (OP). In terms of biological role, catalyzes hydrazine (N-N) bond formation from an unstable ester intermediate, the product of the ATP-dependent condensation of L-N(6)-OH-lysine and L-glutamine substrates by a methionyl-tRNA synthase-like protein. This Rhodococcus jostii (strain RHA1) protein is Cupin 2 conserved barrel domain-containing protein.